Consider the following 214-residue polypeptide: Germin-like protein (214 aa).

The first 22 residues, 1 to 22 (MVMMRIFFFLFLLAFPVFTANA), serve as a signal peptide directing secretion. Cys-28 and Cys-44 form a disulfide bridge. In terms of domain architecture, Cupin type-1 spans 58–204 (SGLAKPGNTT…TTCLDEATIK (147 aa)). Positions 106, 108, and 113 each coordinate Mn(2+).

Belongs to the germin family. In terms of assembly, oligomer (believed to be a pentamer but probably hexamer). As to expression, cotyledons and leaves.

The protein localises to the secreted. It localises to the extracellular space. Its subcellular location is the apoplast. This Ipomoea nil (Japanese morning glory) protein is Germin-like protein (GLP).